A 402-amino-acid chain; its full sequence is 4-hydroxy-3-methylbut-2-enyl diphosphate reductase (402 aa).

Residue cysteine 66 participates in [4Fe-4S] cluster binding. Histidine 96 is a (2E)-4-hydroxy-3-methylbut-2-enyl diphosphate binding site. Histidine 96 contacts dimethylallyl diphosphate. Residue histidine 96 participates in isopentenyl diphosphate binding. Cysteine 157 is a [4Fe-4S] cluster binding site. Histidine 185 lines the (2E)-4-hydroxy-3-methylbut-2-enyl diphosphate pocket. Histidine 185 lines the dimethylallyl diphosphate pocket. Histidine 185 serves as a coordination point for isopentenyl diphosphate. Glutamate 187 functions as the Proton donor in the catalytic mechanism. Residue threonine 250 coordinates (2E)-4-hydroxy-3-methylbut-2-enyl diphosphate. Cysteine 288 contacts [4Fe-4S] cluster. The (2E)-4-hydroxy-3-methylbut-2-enyl diphosphate site is built by serine 317, serine 318, asparagine 319, and serine 379. Residues serine 317, serine 318, asparagine 319, and serine 379 each coordinate dimethylallyl diphosphate. Isopentenyl diphosphate is bound by residues serine 317, serine 318, asparagine 319, and serine 379.

It belongs to the IspH family. It depends on [4Fe-4S] cluster as a cofactor.

It catalyses the reaction isopentenyl diphosphate + 2 oxidized [2Fe-2S]-[ferredoxin] + H2O = (2E)-4-hydroxy-3-methylbut-2-enyl diphosphate + 2 reduced [2Fe-2S]-[ferredoxin] + 2 H(+). The enzyme catalyses dimethylallyl diphosphate + 2 oxidized [2Fe-2S]-[ferredoxin] + H2O = (2E)-4-hydroxy-3-methylbut-2-enyl diphosphate + 2 reduced [2Fe-2S]-[ferredoxin] + 2 H(+). It functions in the pathway isoprenoid biosynthesis; dimethylallyl diphosphate biosynthesis; dimethylallyl diphosphate from (2E)-4-hydroxy-3-methylbutenyl diphosphate: step 1/1. It participates in isoprenoid biosynthesis; isopentenyl diphosphate biosynthesis via DXP pathway; isopentenyl diphosphate from 1-deoxy-D-xylulose 5-phosphate: step 6/6. Its function is as follows. Catalyzes the conversion of 1-hydroxy-2-methyl-2-(E)-butenyl 4-diphosphate (HMBPP) into a mixture of isopentenyl diphosphate (IPP) and dimethylallyl diphosphate (DMAPP). Acts in the terminal step of the DOXP/MEP pathway for isoprenoid precursor biosynthesis. This chain is 4-hydroxy-3-methylbut-2-enyl diphosphate reductase, found in Nostoc sp. (strain PCC 7120 / SAG 25.82 / UTEX 2576).